Reading from the N-terminus, the 916-residue chain is Probable dipeptidyl-aminopeptidase B (916 aa).

Disordered regions lie at residues 1-35 (MGRT…SGLS) and 67-86 (DAEA…KLGS). Residues 1 to 92 (MGRTGDLENA…KLGSGSRTRQ (92 aa)) are Cytoplasmic-facing. Residues 21 to 35 (TSGTSSRSSTDSGLS) show a composition bias toward low complexity. Residues 93 to 113 (IFWALVILCLGGWVLALVLFL) form a helical; Signal-anchor for type II membrane protein membrane-spanning segment. Over 114 to 916 (THGRASSQTA…VKRSVPAFAH (803 aa)) the chain is Vacuolar. Residues Asn-349 and Asn-640 are each glycosylated (N-linked (GlcNAc...) asparagine). Ser-754 (charge relay system) is an active-site residue. N-linked (GlcNAc...) asparagine glycosylation is found at Asn-808 and Asn-813. Active-site charge relay system residues include Asp-831 and His-864.

Belongs to the peptidase S9B family.

The protein resides in the vacuole membrane. The catalysed reaction is Release of an N-terminal dipeptide, Xaa-Yaa-|-Zaa-, from a polypeptide, preferentially when Yaa is Pro, provided Zaa is neither Pro nor hydroxyproline.. Type IV dipeptidyl-peptidase which removes N-terminal dipeptides sequentially from polypeptides having unsubstituted N-termini provided that the penultimate residue is proline. This chain is Probable dipeptidyl-aminopeptidase B (dapB), found in Aspergillus flavus (strain ATCC 200026 / FGSC A1120 / IAM 13836 / NRRL 3357 / JCM 12722 / SRRC 167).